The chain runs to 200 residues: Inducible T-cell costimulator (200 aa).

The signal sequence occupies residues 1-20 (MKPYFSCVFVFCFLIKLLTG). The Extracellular segment spans residues 21–145 (ELNDLANHRM…LCCQLKLWLP (125 aa)). One can recognise an Ig-like V-type domain in the interval 30 to 133 (MFSFHDGGVQ…LSGGYLLIYE (104 aa)). 2 cysteine pairs are disulfide-bonded: cysteine 42–cysteine 109 and cysteine 63–cysteine 83. Asparagine 89 and asparagine 123 each carry an N-linked (GlcNAc...) asparagine glycan. Residues 146–166 (VGCAAFVAALLFGCIFIVWFA) traverse the membrane as a helical segment. The Cytoplasmic portion of the chain corresponds to 167–200 (KKKYRSSVHDPNSEYMFMAAVNTNKKSRLAGMTS).

Homodimer; disulfide-linked. Interacts with ICOSLG. Interacts with PIK3R1. Interacts with TBK1; this interaction is critical for the maturation of T follicular regulatory cells. Post-translationally, N-glycosylated. As to expression, strongly expressed in the spleen and lung. Lower expression seen in liver, kidney and testis.

It localises to the cell membrane. Its function is as follows. Stimulatory receptor expressed in activated or antigen-experienced T-cells that plays an important role in the immune response. Upon binding to its ligand ICOSL expressed on antigen presenting cells (APCs), delivers costimulatory signals that enhances all basic T-cell responses to a foreign antigen, namely proliferation, secretion of lymphokines including IL10, up-regulation of molecules that mediate cell-cell interaction, and effective help for antibody secretion by B-cells. Also acts as a costimulatory receptor critical for the differentiation of T follicular regulatory cells upon immune challenges such as viral infection. Mechanistically, potentiates TCR-induced calcium flux by augmenting PLCG1 activation and actin remodeling. In addition, activates PI3K signaling pathways independently of calcium flux. Essential both for efficient interaction between T and B-cells and for normal antibody responses to T-cell dependent antigens. Prevents the apoptosis of pre-activated T-cells. Plays a critical role in CD40-mediated class switching of immunoglobin isotypes. The sequence is that of Inducible T-cell costimulator (Icos) from Rattus norvegicus (Rat).